The following is a 393-amino-acid chain: Nucleoside permease NupC (393 aa).

The next 9 helical transmembrane spans lie at 3 to 23 (YLIG…ASSG), 32 to 52 (IVVM…TGIG), 87 to 107 (TTFF…IGIL), 168 to 188 (LCAS…MTML), 191 to 211 (EYVV…ASII), 249 to 269 (VVVA…NGIF), 272 to 292 (VFGI…AFLV), 334 to 354 (AIVS…IIAG), and 372 to 392 (LKLL…VGLI).

Belongs to the concentrative nucleoside transporter (CNT) (TC 2.A.41) family.

The protein resides in the cell membrane. Its function is as follows. Transport of the pyrimidine nucleoside uridine. The polypeptide is Nucleoside permease NupC (Bacillus subtilis (strain 168)).